The sequence spans 209 residues: Abscisic acid receptor PYL5 (209 aa).

The START-like stretch occupies residues 44 to 196 (HAPGEHQCSS…NLTSLAEVSE (153 aa)). Cys51 and Cys177 are oxidised to a cystine. Residues Lys80, 109–114 (ATTSTE), 136–142 (RLRNYSS), and Glu161 contribute to the abscisate site. Residues 105-109 (TGLPA) carry the Gate loop motif. The short motif at 135–137 (HRL) is the Latch loop element.

Belongs to the PYR/PYL/RCAR abscisic acid intracellular receptor family. In terms of assembly, monomer. Interacts with PP2C30. Binding to PP2C30 is dependent on the presence of abscisic acid (ABA). Interacts with PP2C51. Binding to PP2C51 is dependent on the presence of ABA. Interacts with PP2C50. Binding to PP2C50 is dependent on the presence of ABA. Interacts with PP2C53. Expressed in leaf sheaths and leaf blades. Expressed at low levels in roots, flowers and seeds.

The protein localises to the nucleus. Its subcellular location is the cytoplasm. It localises to the cytosol. Intracellular abscisic acid (ABA) receptor that functions as a positive regulator of ABA signaling pathway. Together with ABI5, PP2C30 and SAPK2, is part of an ABA signaling unit that modulates seed germination and early seedling growth. Acts as a positive regulator of abiotic stress-responsive gene expression. Inhibits the protein phosphatases PP2C06 and PP2C09 when activated by ABA. In Oryza sativa subsp. japonica (Rice), this protein is Abscisic acid receptor PYL5.